We begin with the raw amino-acid sequence, 233 residues long: Ribosomal RNA small subunit methyltransferase G (233 aa).

The segment at 1 to 25 is disordered; that stretch reads MASRQSPMAVSQPDHADRSAALQLT. S-adenosyl-L-methionine-binding residues include Gly-85, Phe-90, and Arg-155.

It belongs to the methyltransferase superfamily. RNA methyltransferase RsmG family.

The protein resides in the cytoplasm. The catalysed reaction is guanosine(527) in 16S rRNA + S-adenosyl-L-methionine = N(7)-methylguanosine(527) in 16S rRNA + S-adenosyl-L-homocysteine. Its function is as follows. Specifically methylates the N7 position of guanine in position 527 of 16S rRNA. The chain is Ribosomal RNA small subunit methyltransferase G from Rhodopseudomonas palustris (strain BisB5).